We begin with the raw amino-acid sequence, 65 residues long: Kappa-scoloptoxin(04)-Ssd1a (65 aa).

The N-terminal stretch at 1–24 (MKKTCVVSVFLVLLLLKFHDLSMG) is a signal peptide. A propeptide spanning residues 25–36 (EEISPLKKVAPR) is cleaved from the precursor. Disulfide bonds link cysteine 42-cysteine 53 and cysteine 47-cysteine 60.

In terms of tissue distribution, expressed by the venom gland.

The protein resides in the secreted. In terms of biological role, voltage-gated potassium channel inhibitor. The polypeptide is Kappa-scoloptoxin(04)-Ssd1a (Scolopendra dehaani (Thai centipede)).